The following is a 78-amino-acid chain: High temperature lethal protein 1 (78 aa).

Ser-2 carries the N-acetylserine modification.

In terms of assembly, interacts directly with RSC8. Component of the two forms of the RSC complex composed of at least either RSC1 or RSC2, and ARP7, ARP9, LDB7, NPL6, RSC3, RSC30, RSC4, RSC58, RSC6, RSC8, RSC9, SFH1, STH1, HTL1 and probably RTT102. The complexes interact with histone and histone variant components of centromeric chromatin. Component of a fungal-specific module (HTL1-LDB7-NPL6-RSC3-RSC30) within the RSC complex.

The protein resides in the nucleus. Its function is as follows. Required for cell cycle progression through G2/M transition at temperatures higher than 33 degrees Celsius. Component of the chromatin structure-remodeling complex (RSC), which is involved in transcription regulation and nucleosome positioning. RSC is responsible for the transfer of a histone octamer from a nucleosome core particle to naked DNA. The reaction requires ATP and involves an activated RSC-nucleosome intermediate. Remodeling reaction also involves DNA translocation, DNA twist and conformational change. As a reconfigurer of centromeric and flanking nucleosomes, RSC complex is required both for proper kinetochore function in chromosome segregation and, via a PKC1-dependent signaling pathway, for organization of the cellular cytoskeleton. When associated with the RSC complex, may act coordinately with PKC1 to regulate G2/M transition. Together with LDB7, NPL6, RSC3, RSC30 components, defines a fungal-specific module within the RSC complex that plays a role in many cellular functions including the maintenance of cell wall integrity. The polypeptide is High temperature lethal protein 1 (HTL1) (Saccharomyces cerevisiae (strain ATCC 204508 / S288c) (Baker's yeast)).